A 45-amino-acid chain; its full sequence is Photosystem II reaction center protein K (45 aa).

Positions 1–8 are excised as a propeptide; the sequence is MEAALLLA. A helical transmembrane segment spans residues 24–44; the sequence is LPVIPVFFLLLAFVWQAAVGF.

It belongs to the PsbK family. As to quaternary structure, PSII is composed of 1 copy each of membrane proteins PsbA, PsbB, PsbC, PsbD, PsbE, PsbF, PsbH, PsbI, PsbJ, PsbK, PsbL, PsbM, PsbT, PsbX, PsbY, PsbZ, Psb30/Ycf12, peripheral proteins PsbO, CyanoQ (PsbQ), PsbU, PsbV and a large number of cofactors. It forms dimeric complexes.

It is found in the cellular thylakoid membrane. Its function is as follows. One of the components of the core complex of photosystem II (PSII). PSII is a light-driven water:plastoquinone oxidoreductase that uses light energy to abstract electrons from H(2)O, generating O(2) and a proton gradient subsequently used for ATP formation. It consists of a core antenna complex that captures photons, and an electron transfer chain that converts photonic excitation into a charge separation. The chain is Photosystem II reaction center protein K from Synechococcus elongatus (strain ATCC 33912 / PCC 7942 / FACHB-805) (Anacystis nidulans R2).